Here is a 171-residue protein sequence, read N- to C-terminus: Shikimate kinase (171 aa).

Position 14-19 (14-19 (GAGKST)) interacts with ATP. Serine 18 is a binding site for Mg(2+). 3 residues coordinate substrate: aspartate 36, arginine 60, and glycine 82. An ATP-binding site is contributed by arginine 120. Position 139 (arginine 139) interacts with substrate. Glutamine 156 provides a ligand contact to ATP.

It belongs to the shikimate kinase family. As to quaternary structure, monomer. The cofactor is Mg(2+).

It localises to the cytoplasm. The enzyme catalyses shikimate + ATP = 3-phosphoshikimate + ADP + H(+). It participates in metabolic intermediate biosynthesis; chorismate biosynthesis; chorismate from D-erythrose 4-phosphate and phosphoenolpyruvate: step 5/7. Catalyzes the specific phosphorylation of the 3-hydroxyl group of shikimic acid using ATP as a cosubstrate. The polypeptide is Shikimate kinase (Psychromonas ingrahamii (strain DSM 17664 / CCUG 51855 / 37)).